Reading from the N-terminus, the 76-residue chain is Translational regulator CsrA (76 aa).

Belongs to the CsrA/RsmA family. In terms of assembly, homodimer; the beta-strands of each monomer intercalate to form a hydrophobic core, while the alpha-helices form wings that extend away from the core.

The protein resides in the cytoplasm. Its function is as follows. A translational regulator that binds mRNA to regulate translation initiation and/or mRNA stability. Usually binds in the 5'-UTR at or near the Shine-Dalgarno sequence preventing ribosome-binding, thus repressing translation. Its main target seems to be the major flagellin gene, while its function is anatagonized by FliW. The polypeptide is Translational regulator CsrA (Pseudothermotoga lettingae (strain ATCC BAA-301 / DSM 14385 / NBRC 107922 / TMO) (Thermotoga lettingae)).